The following is a 168-amino-acid chain: Lipid transfer protein EARLI 1 (168 aa).

Positions 1 to 25 are cleaved as a signal peptide; it reads MASKNSASIALFFALNIIFFTLTAA. The disordered stretch occupies residues 32-81; sequence PSPKHKPVPSPKPKPVPSPKPKPVPSPSVPSPSVPSPNPRPVTPPRTPGS. An A-1 repeat occupies 34–41; sequence PKHKPVPS. Residues 34–57 are 3 X 8 AA repeats A of P-K-[HP]-K-P-V-P-S; that stretch reads PKHKPVPSPKPKPVPSPKPKPVPS. Pro residues predominate over residues 39–78; it reads VPSPKPKPVPSPKPKPVPSPSVPSPSVPSPNPRPVTPPRT. An A-2 repeat occupies 42–49; that stretch reads PKPKPVPS. Residues 50–57 form an A-3 repeat; sequence PKPKPVPS. A B-1 repeat occupies 58–62; it reads PSVPS. The tract at residues 58-67 is 2 X 58 AA tandem repeats B of P-S-V-P-S; the sequence is PSVPSPSVPS. A B-2 repeat occupies 63-67; that stretch reads PSVPS.

Belongs to the plant LTP family. PEARLI1 subfamily. As to expression, mostly expressed in aerial part of seedlings, and, to a lower extent, in roots. Higher basal levels in early-flowering ecotypes.

The protein localises to the secreted. It is found in the cell wall. Its function is as follows. Probable lipid transfer protein (LTP). May improve freezing survival. Seems to control the flowering process and lignin synthesis. Has an auxiliary role for germinability and early seedling development under low temperature and salt stress conditions, probably in an abscisic acid- (ABA) dependent manner. Confers resistance to Botrytis cinerea and exhibits anti-fungal activity, at least against S.cerevisiae, B.cinerea and Fusarium oxysporum, probably by increasing their membrane permeability. The sequence is that of Lipid transfer protein EARLI 1 (EARLI1) from Arabidopsis thaliana (Mouse-ear cress).